The following is a 1082-amino-acid chain: Error-prone DNA polymerase (1082 aa).

The protein belongs to the DNA polymerase type-C family. DnaE2 subfamily.

It localises to the cytoplasm. It carries out the reaction DNA(n) + a 2'-deoxyribonucleoside 5'-triphosphate = DNA(n+1) + diphosphate. In terms of biological role, DNA polymerase involved in damage-induced mutagenesis and translesion synthesis (TLS). It is not the major replicative DNA polymerase. This is Error-prone DNA polymerase from Xanthomonas campestris pv. campestris (strain B100).